Consider the following 185-residue polypeptide: Large ribosomal subunit protein uL5m (185 aa).

The protein belongs to the universal ribosomal protein uL5 family. As to quaternary structure, component of the mitochondrial ribosome large subunit.

It is found in the mitochondrion. In Arabidopsis thaliana (Mouse-ear cress), this protein is Large ribosomal subunit protein uL5m (RPL5).